A 179-amino-acid polypeptide reads, in one-letter code: Vi polysaccharide biosynthesis protein TviA (179 aa).

The protein operates within glycan metabolism; Vi-antigen biosynthesis. It participates in capsule biogenesis; capsule polysaccharide biosynthesis. This Salmonella typhi protein is Vi polysaccharide biosynthesis protein TviA (tviA).